The following is a 233-amino-acid chain: Large ribosomal subunit protein bL19c (233 aa).

The N-terminal 77 residues, 1–77, are a transit peptide targeting the chloroplast; it reads MASKVLPQAL…FPARNSFVVR (77 aa).

Component of the chloroplast large ribosomal subunit (LSU). Mature 70S chloroplast ribosomes of higher plants consist of a small (30S) and a large (50S) subunit. The 30S small subunit contains 1 molecule of ribosomal RNA (16S rRNA) and 24 different proteins. The 50S large subunit contains 3 rRNA molecules (23S, 5S and 4.5S rRNA) and 33 different proteins.

Its subcellular location is the plastid. The protein localises to the chloroplast. Component of the chloroplast ribosome (chloro-ribosome), a dedicated translation machinery responsible for the synthesis of chloroplast genome-encoded proteins, including proteins of the transcription and translation machinery and components of the photosynthetic apparatus. This is Large ribosomal subunit protein bL19c (RPL19) from Spinacia oleracea (Spinach).